Here is a 450-residue protein sequence, read N- to C-terminus: MMNTSSHLKAQASCPLVEHFLRRKLSKENFDRFIPNRSAMDFDFANYALTQGRKRNVDEVTSASRKAYMTQLAEAMNQNRTRILAFRNKPKALLSSNHSDPPHQQPISVKPRRYIPQNSERVLDAPGIADDFYLNLLDWGSSNVLAIALGDTVYLWDASSGSTYKLVTIDEEEGPVTSINWTQDGLDLAIGLDNSEVQLWDCVSNRQVRTLRGGHESRVGSLAWNNHILTTGGMDGKIVNNDVRIRSSIVETYLGHTEEVCGLKWSESGKKLASGGNDNVVHIWDHRSVASSNPTRQWLHRFEEHTAAVRALAWCPFQASLLATGGGVGDGKIKFWNTHTGACLNSVETGSQVCSLLWSKSERELLSSHGFTQNQLTLWKYPSMVKMAELNGHTSRVLFMAQSPDGCTVASAAGDETLRLWNVFGEPPKTTKKAASKKYTDPFAHVNHIR.

WD repeat units follow at residues 129–166, 171–210, 214–251, 255–294, 304–346, 348–389, and 392–431; these read ADDFYLNLLDWGSSNVLAIALGDTVYLWDASSGSTYKL, EEEGPVTSINWTQDGLDLAIGLDNSEVQLWDCVSNRQVRT, GHESRVGSLAWNNHILTTGGMDGKIVNNDVRIRSSIVE, GHTEEVCGLKWSESGKKLASGGNDNVVHIWDHRSVASSNP, EHTA…CLNS, ETGS…KMAE, and GHTSRVLFMAQSPDGCTVASAAGDETLRLWNVFGEPPKTT.

This sequence belongs to the WD repeat CDC20/Fizzy family. As to quaternary structure, the APC/C is composed of at least 11 subunits that stay tightly associated throughout the cell cycle. Binds to GIG1 and PYM. Part of the mitotic checkpoint complex (MCC); interacts with MAD2 and BUB1.

The protein resides in the nucleus. It functions in the pathway protein modification; protein ubiquitination. Functionally, component of the anaphase promoting complex/cyclosome (APC/C), a cell cycle-regulated E3 ubiquitin-protein ligase complex that controls progression through mitosis and the G1 phase of the cell cycle. The polypeptide is Cell division cycle 20.5, cofactor of APC complex (CDC20-5) (Arabidopsis thaliana (Mouse-ear cress)).